Consider the following 116-residue polypeptide: Probable early E4 11 kDa protein (116 aa).

This chain is Probable early E4 11 kDa protein, found in Human adenovirus A serotype 12 (HAdV-12).